Here is a 696-residue protein sequence, read N- to C-terminus: DNA ligase (696 aa).

NAD(+) is bound by residues 41 to 45 (DGQYD), 90 to 91 (SL), and E120. Residue K122 is the N6-AMP-lysine intermediate of the active site. NAD(+)-binding residues include R143, E180, K296, and K320. Positions 414, 417, 433, and 439 each coordinate Zn(2+). The BRCT domain maps to 603–692 (STPRTLEGLT…PDAVARPAEE (90 aa)).

This sequence belongs to the NAD-dependent DNA ligase family. LigA subfamily. Mg(2+) is required as a cofactor. It depends on Mn(2+) as a cofactor.

It carries out the reaction NAD(+) + (deoxyribonucleotide)n-3'-hydroxyl + 5'-phospho-(deoxyribonucleotide)m = (deoxyribonucleotide)n+m + AMP + beta-nicotinamide D-nucleotide.. DNA ligase that catalyzes the formation of phosphodiester linkages between 5'-phosphoryl and 3'-hydroxyl groups in double-stranded DNA using NAD as a coenzyme and as the energy source for the reaction. It is essential for DNA replication and repair of damaged DNA. The polypeptide is DNA ligase (Kineococcus radiotolerans (strain ATCC BAA-149 / DSM 14245 / SRS30216)).